Reading from the N-terminus, the 84-residue chain is Toxin Tb1 (84 aa).

The signal sequence occupies residues 1-20; sequence MKGMILFISCLLLIGIVVEC. Residues 21–82 enclose the LCN-type CS-alpha/beta domain; sequence KEGYLMDHEG…VWDRATNKCG (62 aa). 4 cysteine pairs are disulfide-bonded: cysteine 31/cysteine 81, cysteine 35/cysteine 57, cysteine 43/cysteine 62, and cysteine 47/cysteine 64. Cysteine 81 carries the post-translational modification Cysteine amide.

It belongs to the long (4 C-C) scorpion toxin superfamily. Sodium channel inhibitor family. Beta subfamily. Expressed by the venom gland.

The protein localises to the secreted. Beta toxins bind voltage-independently at site-4 of sodium channels (Nav) and shift the voltage of activation toward more negative potentials thereby affecting sodium channel activation and promoting spontaneous and repetitive firing. Is lethal to mice. In Tityus bahiensis (Brazilian scorpion), this protein is Toxin Tb1.